Here is a 329-residue protein sequence, read N- to C-terminus: GTP 3',8-cyclase 1 (329 aa).

A Radical SAM core domain is found at 7-230 (GQGRQIDYLR…LDSAEQSGGP (224 aa)). Arginine 16 provides a ligand contact to GTP. Positions 23 and 27 each coordinate [4Fe-4S] cluster. An S-adenosyl-L-methionine-binding site is contributed by tyrosine 29. Residue cysteine 30 participates in [4Fe-4S] cluster binding. Position 65 (arginine 65) interacts with GTP. Glycine 69 lines the S-adenosyl-L-methionine pocket. Threonine 96 contacts GTP. Serine 120 contributes to the S-adenosyl-L-methionine binding site. Lysine 157 lines the GTP pocket. S-adenosyl-L-methionine is bound at residue methionine 191. The [4Fe-4S] cluster site is built by cysteine 255 and cysteine 258. 260 to 262 (RLR) is a GTP binding site. A [4Fe-4S] cluster-binding site is contributed by cysteine 272.

It belongs to the radical SAM superfamily. MoaA family. In terms of assembly, monomer and homodimer. [4Fe-4S] cluster serves as cofactor.

The catalysed reaction is GTP + AH2 + S-adenosyl-L-methionine = (8S)-3',8-cyclo-7,8-dihydroguanosine 5'-triphosphate + 5'-deoxyadenosine + L-methionine + A + H(+). It functions in the pathway cofactor biosynthesis; molybdopterin biosynthesis. In terms of biological role, catalyzes the cyclization of GTP to (8S)-3',8-cyclo-7,8-dihydroguanosine 5'-triphosphate. The sequence is that of GTP 3',8-cyclase 1 (moaA1) from Pseudomonas aeruginosa (strain ATCC 15692 / DSM 22644 / CIP 104116 / JCM 14847 / LMG 12228 / 1C / PRS 101 / PAO1).